Here is a 1067-residue protein sequence, read N- to C-terminus: Carbamoyl phosphate synthase large chain (1067 aa).

The carboxyphosphate synthetic domain stretch occupies residues 1 to 401 (MPLNKDIKKV…AFLKGIRSLE (401 aa)). Positions 129, 169, 175, 176, 208, 210, 215, 241, 242, 243, 284, and 298 each coordinate ATP. Positions 133 to 327 (RDMMNRINQP…IAKVAAKIAL (195 aa)) constitute an ATP-grasp 1 domain. 3 residues coordinate Mg(2+): Q284, E298, and N300. The Mn(2+) site is built by Q284, E298, and N300. Residues 402-549 (IGKYSLEHKK…YSTYEQYDEV (148 aa)) form an oligomerization domain region. Residues 550–932 (VVSDNKKVVV…ALYKGFVGAS (383 aa)) are carbamoyl phosphate synthetic domain. Positions 674–864 (DDLLERLNIA…IVDIATRIML (191 aa)) constitute an ATP-grasp 2 domain. 10 residues coordinate ATP: R710, K749, L751, E755, G780, V781, H782, S783, Q823, and E835. 3 residues coordinate Mg(2+): Q823, E835, and N837. Mn(2+) is bound by residues Q823, E835, and N837. An MGS-like domain is found at 933–1067 (MYTGDKGKTI…NRELEVFNLI (135 aa)). Residues 933–1067 (MYTGDKGKTI…NRELEVFNLI (135 aa)) form an allosteric domain region.

This sequence belongs to the CarB family. In terms of assembly, composed of two chains; the small (or glutamine) chain promotes the hydrolysis of glutamine to ammonia, which is used by the large (or ammonia) chain to synthesize carbamoyl phosphate. Tetramer of heterodimers (alpha,beta)4. Mg(2+) is required as a cofactor. Mn(2+) serves as cofactor.

It catalyses the reaction hydrogencarbonate + L-glutamine + 2 ATP + H2O = carbamoyl phosphate + L-glutamate + 2 ADP + phosphate + 2 H(+). It carries out the reaction hydrogencarbonate + NH4(+) + 2 ATP = carbamoyl phosphate + 2 ADP + phosphate + 2 H(+). It functions in the pathway amino-acid biosynthesis; L-arginine biosynthesis; carbamoyl phosphate from bicarbonate: step 1/1. The protein operates within pyrimidine metabolism; UMP biosynthesis via de novo pathway; (S)-dihydroorotate from bicarbonate: step 1/3. Large subunit of the glutamine-dependent carbamoyl phosphate synthetase (CPSase). CPSase catalyzes the formation of carbamoyl phosphate from the ammonia moiety of glutamine, carbonate, and phosphate donated by ATP, constituting the first step of 2 biosynthetic pathways, one leading to arginine and/or urea and the other to pyrimidine nucleotides. The large subunit (synthetase) binds the substrates ammonia (free or transferred from glutamine from the small subunit), hydrogencarbonate and ATP and carries out an ATP-coupled ligase reaction, activating hydrogencarbonate by forming carboxy phosphate which reacts with ammonia to form carbamoyl phosphate. This chain is Carbamoyl phosphate synthase large chain, found in Clostridium perfringens (strain 13 / Type A).